The sequence spans 664 residues: PAN2-PAN3 deadenylation complex subunit PAN3 (664 aa).

Disordered stretches follow at residues 1 to 27 and 54 to 134; these read MATTGKSATLEDARHGTGSPKMKGREN and DPHK…PGTM. Residues 27-56 form a C3H1-type zinc finger; sequence NAKDTLCRNVTIYGRCRYEDKGCAFNHDPH. Positions 74-96 are enriched in polar residues; it reads DSPSFTPSILSSNGSSPTSQSAT. The span at 115-131 shows a compositional bias: low complexity; the sequence is PRSISSRSNSSTPTTRP. Positions 265–525 are pseudokinase domain; it reads QTLPNTQLPA…NIDIFITGIS (261 aa). ATP contacts are provided by residues Arg317, 366-373, and 425-426; these read DYHPLSKT and SK. Residues 526-564 adopt a coiled-coil conformation; that stretch reads STLMSTFDSALHLDDQLTSDLSRELENGRLVRLMTKLNF. The segment at 565–664 is knob domain; the sequence is VNERPEYEHD…LKPSASRRLH (100 aa).

The protein belongs to the protein kinase superfamily. PAN3 family. In terms of assembly, homodimer. Forms a heterotrimer with a catalytic subunit pan2 to form the poly(A)-nuclease (PAN) deadenylation complex. Interacts (via PAM-2 motif) with poly(A)-binding protein pab1 (via PABC domain), conferring substrate specificity of the enzyme complex.

Its subcellular location is the cytoplasm. Its function is as follows. Regulatory subunit of the poly(A)-nuclease (PAN) deadenylation complex, one of two cytoplasmic mRNA deadenylases involved in mRNA turnover. PAN specifically shortens poly(A) tails of RNA and the activity is stimulated by poly(A)-binding protein pab1. PAN deadenylation is followed by rapid degradation of the shortened mRNA tails by the CCR4-NOT complex. Deadenylated mRNAs are then degraded by two alternative mechanisms, namely exosome-mediated 3'-5' exonucleolytic degradation, or deadenylation-dependent mRNA decaping and subsequent 5'-3' exonucleolytic degradation by xrn1. May also be involved in post-transcriptional maturation of mRNA poly(A) tails. pan3 acts as a positive regulator for PAN activity, recruiting the catalytic subunit pan2 to mRNA via its interaction with RNA and with pab1. In Aspergillus niger (strain ATCC MYA-4892 / CBS 513.88 / FGSC A1513), this protein is PAN2-PAN3 deadenylation complex subunit PAN3.